We begin with the raw amino-acid sequence, 205 residues long: Protein-L-isoaspartate O-methyltransferase (205 aa).

Residue S56 is part of the active site.

It belongs to the methyltransferase superfamily. L-isoaspartyl/D-aspartyl protein methyltransferase family.

It localises to the cytoplasm. It carries out the reaction [protein]-L-isoaspartate + S-adenosyl-L-methionine = [protein]-L-isoaspartate alpha-methyl ester + S-adenosyl-L-homocysteine. Its function is as follows. Catalyzes the methyl esterification of L-isoaspartyl residues in peptides and proteins that result from spontaneous decomposition of normal L-aspartyl and L-asparaginyl residues. It plays a role in the repair and/or degradation of damaged proteins. This is Protein-L-isoaspartate O-methyltransferase from Pyrobaculum arsenaticum (strain DSM 13514 / JCM 11321 / PZ6).